Consider the following 617-residue polypeptide: Phosphomethylpyrimidine synthase (617 aa).

Substrate contacts are provided by residues N230, M259, Y288, H324, 344–346 (SRG), 385–388 (DGLR), and E424. A Zn(2+)-binding site is contributed by H428. Residue Y451 coordinates substrate. H492 is a Zn(2+) binding site. [4Fe-4S] cluster is bound by residues C572, C575, and C580.

Belongs to the ThiC family. Homodimer. [4Fe-4S] cluster is required as a cofactor.

It carries out the reaction 5-amino-1-(5-phospho-beta-D-ribosyl)imidazole + S-adenosyl-L-methionine = 4-amino-2-methyl-5-(phosphooxymethyl)pyrimidine + CO + 5'-deoxyadenosine + formate + L-methionine + 3 H(+). Its pathway is cofactor biosynthesis; thiamine diphosphate biosynthesis. Catalyzes the synthesis of the hydroxymethylpyrimidine phosphate (HMP-P) moiety of thiamine from aminoimidazole ribotide (AIR) in a radical S-adenosyl-L-methionine (SAM)-dependent reaction. In Paracidovorax citrulli (strain AAC00-1) (Acidovorax citrulli), this protein is Phosphomethylpyrimidine synthase.